Consider the following 395-residue polypeptide: Bifunctional fatty acid conjugase/Delta(12)-oleate desaturase (395 aa).

Helical transmembrane passes span 73–93 and 97–117; these read FALA…LPKP and MAWP…WVIA. The Histidine box-1 motif lies at 118-122; that stretch reads HECGH. Residues 130 to 150 traverse the membrane as a helical segment; that stretch reads WVNDAVGFFLHTSLLVPYFPF. Residues 154–158 carry the Histidine box-2 motif; that stretch reads HRRHH. 3 consecutive transmembrane segments (helical) span residues 192-212, 236-256, and 264-284; these read VLTL…FNAS, FWVH…YRLA, and LLSI…LITF. The Histidine box-3 signature appears at 328–332; it reads HVIHH.

The protein belongs to the fatty acid desaturase type 1 family.

It is found in the membrane. It carries out the reaction a (9Z,12Z)-octadecadienoyl-containing glycerolipid + 2 Fe(II)-[cytochrome b5] + O2 + 2 H(+) = a (9Z,11E,13Z)-octadeca-9,11,13-trienoyl-containing glycerolipid + 2 Fe(III)-[cytochrome b5] + 2 H2O. It participates in lipid metabolism; polyunsaturated fatty acid biosynthesis. In terms of biological role, converts a single cis double bond at position 12 of linoleate incorporated into phosphatidylcholine into conjugated 11-trans and 13-cis double bonds. Produces punicic acid (18:3(9Z,11E,13Z)) from linoleic acid and conjugated octadecatetraenoic fatty acid from gamma-linolenic acid. No activity with cis- and trans-vaccenic acid, alpha-linolenic acid or homo-gamma-linolenic acid. 16:2(9Z,12Z), 18:3(9Z,12Z,15Z) and 18:2(9Z,12Z) are substrates for the conjugase to form trans-Delta(11) and cis-Delta(13) double bonds. No activity on the cis-Delta(9) double bonds of oleic and palmitoleic acids. In Punica granatum (Pomegranate), this protein is Bifunctional fatty acid conjugase/Delta(12)-oleate desaturase.